A 1099-amino-acid chain; its full sequence is MGKLIRMGPQERWLLRTKRLHWSRLLFLLGMLIIGSTYQHLRRPRGLSSLWAAVSSHQPIKLASRDLSSEEMMMMSSSPSKPSSEMGGKMLVPQASVGSDEATLSMTVENIPSMPKRTAKMIPTTTKNNYSPTAAGTERRKEDTPTSSRTLTYYTSTSSRQIVKKYTPTPRGEMKSYSPTQVREKVKYTPSPRGRRVGTYVPSTFMTMETSHAITPRTTVKDSDITATYKILETNSLKRIMEETTPTTLKGMFDSTPTFLTHEVEANVLTSPRSVMEKNNLFPPRRVESNSSAHPWGLVGKSNPKTPQGTVLLHTPATSEGQVTISTMTGSSPAETKAFTAAWSLRNPSPRTSVSAIKTAPAIVWRLAKKPSTAPSTSTTPTVRAKLTMQVHHCVVVKPTPAMLTTPSPSLTTALLPEELSPSPSVLPPSLPDLHPKGEYPPDLFSVEERRQGWVVLHVFGMMYVFVALAIVCDEYFVPALGVITDKLQISEDVAGATFMAAGGSAPELFTSLIGVFISHSNVGIGTIVGSAVFNILFVIGTCSLFSREILNLTWWPLFRDVSFYILDLIMLILFFLDSLIAWWESLLLLLAYAFYVFTMKWNKHIEVWVKEQLSRRPVAKVMALEDLSKPGDGAIAVDELQDNKKLKLPSLLTRGSSSTSLHNSTIRSTIYQLMLHSLDPLREVRLAKEKEEESLNQGARAQPQAKAESKPEEEEPAKLPAVTVTPAPVPDIKGDQKENPGGQEDVAEAESTGEMPGEEGETAGEGETEEKSGGETQPEGEGETETQGKGEECEDENEAEGKGDNEGEDEGEIHAEDGEMKGNEGETESQELSAENHGEAKNDEKGVEDGGGSDGGDSEEEEEEEEEQEEEEEEEEQEEEEEEEEEEEEKGNEEPLSLDWPETRQKQAIYLFLLPIVFPLWLTVPDVRRQESRKFFVFTFLGSIMWIAMFSYLMVWWAHQVGETIGISEEIMGLTILAAGTSIPDLITSVIVARKGLGDMAVSSSVGSNIFDITVGLPVPWLLFSLINGLQPVPVSSNGLFCAIVLLFLMLLFVISSIASCKWRMNKILGFTMFLLYFVFLIISVMLEDRIISCPVSV.

The Extracellular segment spans residues 1–452 (MGKLIRMGPQ…DLFSVEERRQ (452 aa)). The segment covering 123 to 134 (PTTTKNNYSPTA) has biased composition (polar residues). 3 disordered regions span residues 123-150 (PTTT…SSRT), 169-199 (TPRG…RVGT), and 284-304 (PRRV…KSNP). Asn290 carries N-linked (GlcNAc...) asparagine glycosylation. A helical transmembrane segment spans residues 453 to 473 (GWVVLHVFGMMYVFVALAIVC). Topologically, residues 474–497 (DEYFVPALGVITDKLQISEDVAGA) are cytoplasmic. The stretch at 494–534 (VAGATFMAAGGSAPELFTSLIGVFISHSNVGIGTIVGSAVF) is one Alpha-1 repeat. The chain crosses the membrane as a helical span at residues 498–518 (TFMAAGGSAPELFTSLIGVFI). Over 519–522 (SHSN) the chain is Extracellular. The chain crosses the membrane as a helical span at residues 523–543 (VGIGTIVGSAVFNILFVIGTC). Topologically, residues 544–563 (SLFSREILNLTWWPLFRDVS) are cytoplasmic. A helical membrane pass occupies residues 564–584 (FYILDLIMLILFFLDSLIAWW). A topological domain (extracellular) is located at residue Glu585. A helical membrane pass occupies residues 586-606 (SLLLLLAYAFYVFTMKWNKHI). At 607–907 (EVWVKEQLSR…SLDWPETRQK (301 aa)) the chain is on the cytoplasmic side. Ser658 carries the post-translational modification Phosphoserine. The tract at residues 690-901 (EKEEESLNQG…GNEEPLSLDW (212 aa)) is disordered. Position 724 is a phosphothreonine (Thr724). Residues 757–769 (PGEEGETAGEGET) are compositionally biased toward acidic residues. 2 stretches are compositionally biased toward basic and acidic residues: residues 813–825 (EIHA…KGNE) and 835–849 (AENH…KGVE). Acidic residues predominate over residues 857–892 (GDSEEEEEEEEEQEEEEEEEEQEEEEEEEEEEEEKG). The chain crosses the membrane as a helical span at residues 908-928 (QAIYLFLLPIVFPLWLTVPDV). Over 929 to 935 (RRQESRK) the chain is Extracellular. A helical membrane pass occupies residues 936-956 (FFVFTFLGSIMWIAMFSYLMV). At 957-971 (WWAHQVGETIGISEE) the chain is on the cytoplasmic side. Residues 972-992 (IMGLTILAAGTSIPDLITSVI) traverse the membrane as a helical segment. The Alpha-2 repeat unit spans residues 979-1010 (AAGTSIPDLITSVIVARKGLGDMAVSSSVGSN). The Extracellular portion of the chain corresponds to 993 to 1010 (VARKGLGDMAVSSSVGSN). The helical transmembrane segment at 1011-1031 (IFDITVGLPVPWLLFSLINGL) threads the bilayer. The Cytoplasmic segment spans residues 1032–1039 (QPVPVSSN). A helical membrane pass occupies residues 1040–1060 (GLFCAIVLLFLMLLFVISSIA). Over 1061–1068 (SCKWRMNK) the chain is Extracellular. Residues 1069–1089 (ILGFTMFLLYFVFLIISVMLE) traverse the membrane as a helical segment. Over 1090 to 1099 (DRIISCPVSV) the chain is Cytoplasmic.

This sequence belongs to the Ca(2+):cation antiporter (CaCA) (TC 2.A.19) family. SLC24A subfamily. The uncleaved signal sequence is required for efficient membrane targeting and proper membrane integration. Expressed in the retina, particularly in the inner segment, outer and inner nuclear layers, and ganglion cell layer.

The protein localises to the cell membrane. The catalysed reaction is Ca(2+)(out) + K(+)(out) + 4 Na(+)(in) = Ca(2+)(in) + K(+)(in) + 4 Na(+)(out). Calcium, potassium:sodium antiporter that transports 1 Ca(2+) and 1 K(+) in exchange for 4 Na(+). Critical component of the visual transduction cascade, controlling the calcium concentration of outer segments during light and darkness. Light causes a rapid lowering of cytosolic free calcium in the outer segment of both retinal rod and cone photoreceptors and the light-induced lowering of calcium is caused by extrusion via this protein which plays a key role in the process of light adaptation. This chain is Sodium/potassium/calcium exchanger 1, found in Homo sapiens (Human).